Here is a 455-residue protein sequence, read N- to C-terminus: Serine--tRNA ligase (455 aa).

252–254 (TAE) is an L-serine binding site. ATP is bound by residues 283-285 (RKE) and Val-299. Glu-306 contacts L-serine. ATP is bound at residue 370-373 (EVVS). Thr-406 is an L-serine binding site.

This sequence belongs to the class-II aminoacyl-tRNA synthetase family. Type-1 seryl-tRNA synthetase subfamily. Homodimer. The tRNA molecule binds across the dimer.

Its subcellular location is the cytoplasm. It catalyses the reaction tRNA(Ser) + L-serine + ATP = L-seryl-tRNA(Ser) + AMP + diphosphate + H(+). It carries out the reaction tRNA(Sec) + L-serine + ATP = L-seryl-tRNA(Sec) + AMP + diphosphate + H(+). Its pathway is aminoacyl-tRNA biosynthesis; selenocysteinyl-tRNA(Sec) biosynthesis; L-seryl-tRNA(Sec) from L-serine and tRNA(Sec): step 1/1. Catalyzes the attachment of serine to tRNA(Ser). Is also able to aminoacylate tRNA(Sec) with serine, to form the misacylated tRNA L-seryl-tRNA(Sec), which will be further converted into selenocysteinyl-tRNA(Sec). This is Serine--tRNA ligase from Thermococcus kodakarensis (strain ATCC BAA-918 / JCM 12380 / KOD1) (Pyrococcus kodakaraensis (strain KOD1)).